A 141-amino-acid chain; its full sequence is Protein nfe1 (141 aa).

To the N-terminal of nitrogenase iron protein (NifH). Has lost the ATP-binding site.

In terms of biological role, responsible for the nodulation efficiency and competitive ability of strain GR4 on alfalfa roots. This chain is Protein nfe1 (nfe1), found in Rhizobium meliloti (Ensifer meliloti).